A 78-amino-acid polypeptide reads, in one-letter code: Translation initiation factor IF-1, chloroplastic (78 aa).

The S1-like domain occupies 1 to 73 (MASNRELIEM…TKGRIIYRLR (73 aa)).

This sequence belongs to the IF-1 family. As to quaternary structure, component of the 30S ribosomal translation pre-initiation complex which assembles on the 30S ribosome in the order IF-2 and IF-3, IF-1 and N-formylmethionyl-tRNA(fMet); mRNA recruitment can occur at any time during PIC assembly.

It is found in the plastid. The protein localises to the chloroplast. Its function is as follows. One of the essential components for the initiation of protein synthesis. Stabilizes the binding of IF-2 and IF-3 on the 30S subunit to which N-formylmethionyl-tRNA(fMet) subsequently binds. Helps modulate mRNA selection, yielding the 30S pre-initiation complex (PIC). Upon addition of the 50S ribosomal subunit IF-1, IF-2 and IF-3 are released leaving the mature 70S translation initiation complex. The polypeptide is Translation initiation factor IF-1, chloroplastic (Ostreococcus tauri).